A 207-amino-acid chain; its full sequence is Outer-membrane lipoprotein LolB (207 aa).

The first 21 residues, 1–21, serve as a signal peptide directing secretion; it reads MPMRKRHFYRLLPLASLLLAA. A lipid anchor (N-palmitoyl cysteine) is attached at cysteine 22. The S-diacylglycerol cysteine moiety is linked to residue cysteine 22.

The protein belongs to the LolB family. As to quaternary structure, monomer.

Its subcellular location is the cell outer membrane. Plays a critical role in the incorporation of lipoproteins in the outer membrane after they are released by the LolA protein. In Yersinia pestis bv. Antiqua (strain Antiqua), this protein is Outer-membrane lipoprotein LolB.